A 401-amino-acid chain; its full sequence is Argininosuccinate synthase (401 aa).

8–16 contributes to the ATP binding site; that stretch reads AYSGGLDTS. Tyrosine 85 is an L-citrulline binding site. Glycine 115 is a binding site for ATP. 3 residues coordinate L-aspartate: threonine 117, asparagine 121, and aspartate 122. Asparagine 121 lines the L-citrulline pocket. L-citrulline is bound by residues arginine 125, serine 173, glutamate 258, and tyrosine 270.

Belongs to the argininosuccinate synthase family. Type 1 subfamily. In terms of assembly, homotetramer.

It is found in the cytoplasm. It catalyses the reaction L-citrulline + L-aspartate + ATP = 2-(N(omega)-L-arginino)succinate + AMP + diphosphate + H(+). The protein operates within amino-acid biosynthesis; L-arginine biosynthesis; L-arginine from L-ornithine and carbamoyl phosphate: step 2/3. The polypeptide is Argininosuccinate synthase (Staphylococcus carnosus (strain TM300)).